Consider the following 148-residue polypeptide: Large ribosomal subunit protein eL19 (148 aa).

A compositionally biased stretch (basic residues) spans 52–76 (KPKKGISSYRSKKIAQQKKKGRRRG). Positions 52-95 (KPKKGISSYRSKKIAQQKKKGRRRGPGSIKGAKGARRPKKDEWM) are disordered.

The protein belongs to the eukaryotic ribosomal protein eL19 family. As to quaternary structure, part of the 50S ribosomal subunit.

In terms of biological role, binds to the 23S rRNA. This is Large ribosomal subunit protein eL19 from Methanothermobacter thermautotrophicus (strain ATCC 29096 / DSM 1053 / JCM 10044 / NBRC 100330 / Delta H) (Methanobacterium thermoautotrophicum).